The sequence spans 300 residues: ADP-ribosyl cyclase/cyclic ADP-ribose hydrolase 1 (300 aa).

At 1 to 21 the chain is on the cytoplasmic side; that stretch reads MANCEFSPVSGDKPCCRLSRR. Residues 22-42 form a helical; Signal-anchor for type II membrane protein membrane-spanning segment; sequence AQLCLGVSILVLILVVVLAVV. Residues 43–300 lie on the Extracellular side of the membrane; that stretch reads VPRWRQQWSG…PEDSSCTSEI (258 aa). Intrachain disulfides connect Cys-67/Cys-82, Cys-99/Cys-180, and Cys-160/Cys-173. N-linked (GlcNAc...) asparagine glycosylation is present at Asn-100. Cys-119 is a catalytic residue. N-linked (GlcNAc...) asparagine glycosylation occurs at Asn-164. The active site involves Cys-201. N-linked (GlcNAc...) asparagine glycans are attached at residues Asn-209 and Asn-219. 2 disulfides stabilise this stretch: Cys-254-Cys-275 and Cys-287-Cys-296.

This sequence belongs to the ADP-ribosyl cyclase family. Homodimer. As to expression, expressed at high levels in pancreas, liver, kidney, brain, testis, ovary, placenta, malignant lymphoma and neuroblastoma.

Its subcellular location is the cell surface. The protein localises to the membrane. The catalysed reaction is 2'-phospho-cyclic ADP-ribose + nicotinate = nicotinate-adenine dinucleotide phosphate. It carries out the reaction NAD(+) = cyclic ADP-beta-D-ribose + nicotinamide + H(+). The enzyme catalyses NAD(+) + H2O = ADP-D-ribose + nicotinamide + H(+). It catalyses the reaction cyclic ADP-beta-D-ribose + H2O = ADP-D-ribose. The catalysed reaction is NADP(+) = 2'-phospho-cyclic ADP-ribose + nicotinamide. It carries out the reaction nicotinate + NADP(+) = nicotinate-adenine dinucleotide phosphate + nicotinamide. With respect to regulation, ATP inhibits the cADPR hydrolyzing activity. Functionally, synthesizes cyclic ADP-ribose (cADPR), a second messenger for glucose-induced insulin secretion. Synthesizes the Ca(2+) mobilizer nicotinate-adenine dinucleotide phosphate, NAADP(+), from 2'-phospho-cADPR and nicotinic acid, as well as from NADP(+) and nicotinic acid. At both pH 5.0 and pH 7.4 preferentially transforms 2'-phospho-cADPR into NAADP(+), while preferentially cleaving NADP(+) to cADPR and ADPRP rather than into NADDP(+). Has cADPR hydrolase activity. The polypeptide is ADP-ribosyl cyclase/cyclic ADP-ribose hydrolase 1 (CD38) (Homo sapiens (Human)).